A 347-amino-acid chain; its full sequence is uncharacterized protein (347 aa).

The first 26 residues, 1–26 (MQGRVAGSCAPLGLLLVCLHLPGLFA), serve as a signal peptide directing secretion. The segment covering 41–60 (GTNLPQLGQPSSTGPSNSEH) has biased composition (polar residues). Disordered stretches follow at residues 41-110 (GTNL…MDSW) and 148-189 (SGPL…AGGK). The span at 148-157 (SGPLPGESSP) shows a compositional bias: low complexity.

In terms of assembly, binds to numerous extracellular matrix proteins.

It is found in the secreted. The protein resides in the extracellular space. The protein localises to the extracellular matrix. This is an uncharacterized protein from Pan troglodytes (Chimpanzee).